The following is a 404-amino-acid chain: Chorismate synthase (404 aa).

Positions 43 and 49 each coordinate NADP(+). FMN-binding positions include 138-140 (RAS), 259-260 (QA), Gly303, 318-322 (KPIST), and Arg344.

It belongs to the chorismate synthase family. Homotetramer. It depends on FMNH2 as a cofactor.

The catalysed reaction is 5-O-(1-carboxyvinyl)-3-phosphoshikimate = chorismate + phosphate. It participates in metabolic intermediate biosynthesis; chorismate biosynthesis; chorismate from D-erythrose 4-phosphate and phosphoenolpyruvate: step 7/7. Functionally, catalyzes the anti-1,4-elimination of the C-3 phosphate and the C-6 proR hydrogen from 5-enolpyruvylshikimate-3-phosphate (EPSP) to yield chorismate, which is the branch point compound that serves as the starting substrate for the three terminal pathways of aromatic amino acid biosynthesis. This reaction introduces a second double bond into the aromatic ring system. This is Chorismate synthase from Mycolicibacterium paratuberculosis (strain ATCC BAA-968 / K-10) (Mycobacterium paratuberculosis).